Reading from the N-terminus, the 322-residue chain is Lipoyl synthase (322 aa).

[4Fe-4S] cluster contacts are provided by C61, C66, C72, C87, C91, C94, and S300. Residues 73-289 form the Radical SAM core domain; that stretch reads WDKKHATFMI…ETVAYTKGFL (217 aa).

Belongs to the radical SAM superfamily. Lipoyl synthase family. [4Fe-4S] cluster serves as cofactor.

The protein localises to the cytoplasm. It carries out the reaction [[Fe-S] cluster scaffold protein carrying a second [4Fe-4S](2+) cluster] + N(6)-octanoyl-L-lysyl-[protein] + 2 oxidized [2Fe-2S]-[ferredoxin] + 2 S-adenosyl-L-methionine + 4 H(+) = [[Fe-S] cluster scaffold protein] + N(6)-[(R)-dihydrolipoyl]-L-lysyl-[protein] + 4 Fe(3+) + 2 hydrogen sulfide + 2 5'-deoxyadenosine + 2 L-methionine + 2 reduced [2Fe-2S]-[ferredoxin]. It participates in protein modification; protein lipoylation via endogenous pathway; protein N(6)-(lipoyl)lysine from octanoyl-[acyl-carrier-protein]: step 2/2. Its function is as follows. Catalyzes the radical-mediated insertion of two sulfur atoms into the C-6 and C-8 positions of the octanoyl moiety bound to the lipoyl domains of lipoate-dependent enzymes, thereby converting the octanoylated domains into lipoylated derivatives. The protein is Lipoyl synthase of Rhizobium meliloti (strain 1021) (Ensifer meliloti).